We begin with the raw amino-acid sequence, 140 residues long: Profilin-2 (140 aa).

Ala-2 is modified (N-acetylalanine).

This sequence belongs to the profilin family. As to quaternary structure, occurs in many kinds of cells as a complex with monomeric actin in a 1:1 ratio. Interacts with PFN2. Interacts with ACTMAP (via N-terminus); the interaction may facilitate efficient cleavage of the acetylated N-terminus of immature actin by ACTMAP.

The protein localises to the cytoplasm. Its subcellular location is the cytoskeleton. In terms of biological role, binds to actin and affects the structure of the cytoskeleton. At high concentrations, profilin prevents the polymerization of actin, whereas it enhances it at low concentrations. By binding to PIP2, it inhibits the formation of IP3 and DG. The sequence is that of Profilin-2 (Pfn2) from Rattus norvegicus (Rat).